Consider the following 343-residue polypeptide: tRNA N6-adenosine threonylcarbamoyltransferase (343 aa).

Histidine 111 and histidine 115 together coordinate Fe cation. Residues leucine 134–glycine 138, aspartate 167, glycine 180, and asparagine 276 contribute to the substrate site. Aspartate 304 contacts Fe cation.

The protein belongs to the KAE1 / TsaD family. It depends on Fe(2+) as a cofactor.

It localises to the cytoplasm. It carries out the reaction L-threonylcarbamoyladenylate + adenosine(37) in tRNA = N(6)-L-threonylcarbamoyladenosine(37) in tRNA + AMP + H(+). Functionally, required for the formation of a threonylcarbamoyl group on adenosine at position 37 (t(6)A37) in tRNAs that read codons beginning with adenine. Is involved in the transfer of the threonylcarbamoyl moiety of threonylcarbamoyl-AMP (TC-AMP) to the N6 group of A37, together with TsaE and TsaB. TsaD likely plays a direct catalytic role in this reaction. In Chromohalobacter salexigens (strain ATCC BAA-138 / DSM 3043 / CIP 106854 / NCIMB 13768 / 1H11), this protein is tRNA N6-adenosine threonylcarbamoyltransferase.